A 122-amino-acid polypeptide reads, in one-letter code: Large ribosomal subunit protein bL12 (122 aa).

Belongs to the bacterial ribosomal protein bL12 family. As to quaternary structure, homodimer. Part of the ribosomal stalk of the 50S ribosomal subunit. Forms a multimeric L10(L12)X complex, where L10 forms an elongated spine to which 2 to 4 L12 dimers bind in a sequential fashion. Binds GTP-bound translation factors.

In terms of biological role, forms part of the ribosomal stalk which helps the ribosome interact with GTP-bound translation factors. Is thus essential for accurate translation. In Cellvibrio japonicus (strain Ueda107) (Pseudomonas fluorescens subsp. cellulosa), this protein is Large ribosomal subunit protein bL12.